A 2193-amino-acid chain; its full sequence is Highly reducing polyketide synthase VdtX (2193 aa).

Residues 1-417 (MAICGIAVRL…GVNAHVIIES (417 aa)) form the Ketosynthase family 3 (KS3) domain. Residues cysteine 170, histidine 306, and histidine 340 each act as for beta-ketoacyl synthase activity in the active site. The segment at 513-809 (VFAGQGAQWP…HPYVPCLIRF (297 aa)) is malonyl-CoA:ACP transacylase (MAT) domain. The tract at residues 877–1001 (HELLGTRVVD…GEVAQENLSR (125 aa)) is N-terminal hotdog fold. Residues 877–1128 (HELLGTRVVD…DIVLRPLGAN (252 aa)) form a dehydratase (DH) domain region. Positions 877–1202 (HELLGTRVVD…LQRQPKPSSE (326 aa)) constitute a PKS/mFAS DH domain. Residue histidine 909 is the Proton acceptor; for dehydratase activity of the active site. The C-terminal hotdog fold stretch occupies residues 1032 to 1202 (SVTSNTVSGR…LQRQPKPSSE (171 aa)). The active-site Proton donor; for dehydratase activity is aspartate 1093. The tract at residues 1256 to 1390 (NYLNEPQQRI…DRWDSILKAA (135 aa)) is methyltransferase (CMet) domain. The interval 1575–1783 (GQQVQLLGDD…SGQHIGQLRL (209 aa)) is enoyl reductase (ER) domain. Residues 1807-1981 (ASYLLVGGLG…ASVIDIGEVQ (175 aa)) are ketoreductase (KR) domain. The 82-residue stretch at 2102–2183 (PSATQFVSLE…AMGEHVIREL (82 aa)) folds into the Carrier domain. Residue serine 2143 is modified to O-(pantetheine 4'-phosphoryl)serine.

Its function is as follows. Highly reducing polyketide synthase; part of the gene cluster that mediates the biosynthesis of viriditoxin, one of the 'classical' secondary metabolites produced by fungi and that has antibacterial activity. The first step is performed by the polyketide synthase VdtA which condenses one acetyl-CoA and 6 malonyl-CoA units to form the heptaketide monomer backbone of viriditoxin. The product of VdtA is then O-methylated on C7 by the O-methyltransferase VdtC. The O-methyl group is important for the stereoselective coupling of the monomers at the final step of viriditoxin biosynthesis. The short-chain dehydrogenase/reductase VdtF is involved in the reduction of the C3-C4 double bond. The FAD-binding monooxygenase VdtE then converts the ketone group into a methyl-ester group to yield semi-viriditoxin. Finally, the laccase VdtB is involved in dimerization of 2 semi-viriditoxin molecules to yield the final viriditoxin. The non-catalytic carboxylesterase-like protein VdtD affects the stereochemistical outcome of the coupling. The highly reducing polyketide synthase VdtX is not involved in viriditoxin synthesis, but might possibly play a role in the production of additional metabolites not identified yet. In Byssochlamys spectabilis (Paecilomyces variotii), this protein is Highly reducing polyketide synthase VdtX.